Here is a 293-residue protein sequence, read N- to C-terminus: Microtubule-associated protein RP/EB family member 1B (293 aa).

The Calponin-homology (CH) domain occupies 13-115 (FVGRNEILSW…FLQWLKRFCD (103 aa)). Disordered regions lie at residues 124–188 (ENYN…SAEV) and 262–293 (LGLE…ETQT). Positions 129-141 (VERRSRGGREKSV) are enriched in basic and acidic residues. The segment covering 151–166 (LQTNNMHHPPVATSNK) has biased composition (polar residues). An EB1 C-terminal domain is found at 180–250 (GGSNSSAEVQ…LYATDANESV (71 aa)). The segment covering 266-285 (GYEEEGKEEEEEEEEEEEEA) has biased composition (acidic residues).

Belongs to the MAPRE family. As to quaternary structure, homodimer and heterodimer with EB1A. Highly expressed in guard cells of leaf stomata, pollen grains and pollen tubes. Expressed in young roots.

The protein localises to the cytoplasm. It is found in the cytoskeleton. The protein resides in the spindle pole. It localises to the phragmoplast. Its function is as follows. Binds to the plus end of microtubules and regulates the dynamics of the microtubule cytoskeleton. May be involved in anchoring microtubules to their nucleation sites and/or functioning as a reservoir for distribution to the growing end. In plants, microtubule minus ends are not necessarily severed from the nucleation site and transported to the plus end of a microtubule as part of the recycling process. May play a role in endomembrane organization during polarized growth of plant cells. In Arabidopsis thaliana (Mouse-ear cress), this protein is Microtubule-associated protein RP/EB family member 1B (EB1B).